Here is a 172-residue protein sequence, read N- to C-terminus: Peptidyl-prolyl cis-trans isomerase (172 aa).

A PPIase cyclophilin-type domain is found at 7–170; it reads FFDMTVGGAP…KVVKVADCGQ (164 aa).

This sequence belongs to the cyclophilin-type PPIase family.

The protein localises to the cytoplasm. It catalyses the reaction [protein]-peptidylproline (omega=180) = [protein]-peptidylproline (omega=0). Binds cyclosporin A (CsA). CsA mediates some of its effects via an inhibitory action on PPIase. Its function is as follows. PPIases accelerate the folding of proteins. It catalyzes the cis-trans isomerization of proline imidic peptide bonds in oligopeptides. The sequence is that of Peptidyl-prolyl cis-trans isomerase (CYP) from Zea mays (Maize).